A 205-amino-acid chain; its full sequence is Large ribosomal subunit protein uL3 (205 aa).

It belongs to the universal ribosomal protein uL3 family. In terms of assembly, part of the 50S ribosomal subunit. Forms a cluster with proteins L14 and L19.

In terms of biological role, one of the primary rRNA binding proteins, it binds directly near the 3'-end of the 23S rRNA, where it nucleates assembly of the 50S subunit. The protein is Large ribosomal subunit protein uL3 of Thermosipho melanesiensis (strain DSM 12029 / CIP 104789 / BI429).